Consider the following 827-residue polypeptide: Histone acetyltransferase MOF (827 aa).

Disordered regions lie at residues 1-190 (MSEA…SDTV), 237-276 (QLGL…AVYL), 288-309 (STPG…MPPP), and 324-360 (EAIS…TSRE). Over residues 19 to 30 (PIEEEHEPEQEP) the composition is skewed to acidic residues. A compositionally biased stretch (polar residues) spans 55-69 (LDVSGSDQSAEQSLD). Residues 103–116 (SSTSTSSTRSSSSS) show a composition bias toward low complexity. The span at 121-133 (VSEAEEAPPEPEP) shows a compositional bias: acidic residues. Residues 141–150 (QEEKKEDGQD) are compositionally biased toward basic and acidic residues. Over residues 176-186 (DQEIETEDEPS) the composition is skewed to acidic residues. The segment covering 243–253 (AAPPPPPPPPA) has biased composition (pro residues). The segment covering 326–350 (ISDDSSETSSSDDDEEEEEDEDDAL) has biased composition (acidic residues). Lysine 372 participates in a covalent cross-link: Glycyl lysine isopeptide (Lys-Gly) (interchain with G-Cter in ubiquitin). Residues 382–433 (IYFIRREDGTVHRGQVLQSRTTENAAAPDEYYVHYVGLNRRLDGWVGRHRIS) form the Tudor-knot domain. Residues lysine 483, lysine 532, and lysine 539 each participate in a glycyl lysine isopeptide (Lys-Gly) (interchain with G-Cter in ubiquitin) cross-link. In terms of domain architecture, MYST-type HAT spans 538 to 813 (TKIKYIDKLQ…IDTDYLVWSP (276 aa)). A C2HC MYST-type zinc finger spans residues 571 to 596 (LYVCEYCLKYMRFRSSYAYHLHECDR). Zn(2+)-binding residues include cysteine 574, cysteine 577, histidine 590, and cysteine 594. Position 638 is an N6-acetyllysine; by autocatalysis (lysine 638). Residues isoleucine 681, arginine 689, lysine 690, glycine 691, glycine 693, and lysine 694 each coordinate acetyl-CoA. Catalysis depends on glutamate 714, which acts as the Proton donor/acceptor. Lysine 715 is covalently cross-linked (Glycyl lysine isopeptide (Lys-Gly) (interchain with G-Cter in ubiquitin)). Residues serine 718 and serine 727 each contribute to the acetyl-CoA site. A Glycyl lysine isopeptide (Lys-Gly) (interchain with G-Cter in ubiquitin) cross-link involves residue lysine 749. Position 774 (tyrosine 774) interacts with acetyl-CoA. Glycyl lysine isopeptide (Lys-Gly) (interchain with G-Cter in ubiquitin) cross-links involve residues lysine 776, lysine 798, and lysine 801. Lysine 798 contacts acetyl-CoA.

It belongs to the MYST (SAS/MOZ) family. In terms of assembly, component of the male-specific lethal (MSL) histone acetyltransferase complex, composed of mof, mle, msl-1, msl-2 and msl-3 proteins, as well as roX1 and roX2 non-coding RNAs. Component of a maternal MSL subcomplex composed of mof, msl-1 and msl-3. Component of the non-specific lethal (NLS) histone acetyltransferase complex at least composed of mof, nls1, dgt1/NSL2, Rcd1/NSL3, Rcd5/MCRS2, MBD-R2 and wds. In males, interacts with nucleoporin Mgtor. In terms of processing, autoacetylation at Lys-638 is required for binding histone H4 with high affinity and for proper function. Ubiquitinated by msl-2.

It localises to the nucleus. It is found in the chromosome. The enzyme catalyses L-lysyl-[histone] + acetyl-CoA = N(6)-acetyl-L-lysyl-[histone] + CoA + H(+). Its function is as follows. Histone acetyltransferase that catalyzes the formation of the majority of histone H4 acetylation at 'Lys-16' (H4K16ac), an epigenetic mark that prevents chromatin compaction and constitutes the only acetylation mark intergenerationally transmitted. Catalytic component of the male-specific lethal (MSL) complex, a multiprotein complex essential for elevating transcription of the single X chromosome in the male (X chromosome dosage compensation). The MSL complex specifically associates with the single X chromosome in males and mediates formation of H4K16ac, promoting a two-fold activation of X chromosome. Dosage compensation ensures that males with a single X chromosome have the same amount of most X-linked gene products as females with two X chromosomes. In oocytes, mof is also part of a maternal MSL subcomplex that mediates H4K16ac deposition for intergenerational transmission: H4K16ac prepares the chromatin landscape for establishment of nucleosome accessibility and poises genes for future activation. H4K16ac constitutes the only acetylation mark maintained from oocytes to fertilized embryos. Mof also constitutes the catalytic component of the non-specific lethal (NLS) complex, which promotes expression of housekeeping genes on X chromosome and autosomes. The NSL complex promotes strong expression of housekeeping genes compared to the two-fold expression mediated by the MSL complex on X chromosome, suggesting that the activation potential of mof is constrained in the context of dosage compensation. This chain is Histone acetyltransferase MOF, found in Drosophila melanogaster (Fruit fly).